Consider the following 493-residue polypeptide: ATP-dependent RNA helicase dbp3 (493 aa).

Residues 1-38 (MTKRDYQNDTTAESRPTKKSKGEKKVKETKEKKEKKVK) are disordered. Basic and acidic residues predominate over residues 23–34 (EKKVKETKEKKE). The short motif at 97–105 (SFKSPTSIQ) is the Q motif element. The 177-residue stretch at 109–285 (WPLLFGGRDV…STFMSSPVTV (177 aa)) folds into the Helicase ATP-binding domain. 122–129 (AETGSGKT) serves as a coordination point for ATP. Positions 232 to 235 (DEAD) match the DEAD box motif. The region spanning 316 to 462 (RLVQLLKQHQ…EVPEELLKFG (147 aa)) is the Helicase C-terminal domain.

This sequence belongs to the DEAD box helicase family. DDX5/DBP2 subfamily.

The protein localises to the nucleus. It localises to the nucleolus. The catalysed reaction is ATP + H2O = ADP + phosphate + H(+). In terms of biological role, ATP-dependent RNA helicase required for 60S ribosomal subunit synthesis. Involved in efficient pre-rRNA processing, predominantly at site A3, which is necessary for the normal formation of 25S and 5.8S rRNAs. This is ATP-dependent RNA helicase dbp3 (dbp3) from Aspergillus terreus (strain NIH 2624 / FGSC A1156).